Reading from the N-terminus, the 326-residue chain is Apoptosis facilitator Bcl-2-like protein 14 (326 aa).

Ser44 carries the post-translational modification Phosphoserine. The segment at 100-147 (AEKEEDSQSSPPEICAQAQRSGVPQARPRSPKWPRSRSSMDQRLEHKA) is disordered. The span at 137–147 (SSMDQRLEHKA) shows a compositional bias: basic and acidic residues. The BH3 signature appears at 211 to 225 (IVELLKYSGEQLERE). Positions 307–314 (WIQQHGGW) match the BH2 motif.

It belongs to the Bcl-2 family. Post-translationally, phosphorylated by MELK, leading to inhibit its pro-apoptotic function.

Its subcellular location is the cytoplasm. In terms of biological role, plays a role in apoptosis. The polypeptide is Apoptosis facilitator Bcl-2-like protein 14 (BCL2L14) (Bos taurus (Bovine)).